The sequence spans 265 residues: Cell adhesion molecule CEACAM7 (265 aa).

Positions Met-1–Gln-35 are cleaved as a signal peptide. Residues Thr-36 to Phe-142 enclose the Ig-like V-type domain. 7 N-linked (GlcNAc...) asparagine glycosylation sites follow: Asn-57, Asn-85, Asn-105, Asn-112, Asn-174, Asn-183, and Asn-198. In terms of domain architecture, Ig-like C2-type spans Pro-146–Asn-233. Residues Cys-168 and Cys-216 are joined by a disulfide bond. Ser-242 carries the GPI-anchor amidated serine lipid modification. The propeptide at Ser-243 to Ile-265 is removed in mature form.

Belongs to the immunoglobulin superfamily. CEA family. In terms of assembly, homodimer. As to expression, expressed in columnar epithelial cells of the colon (at protein level). Strongly down-regulated in colonic adenocarcinomas.

Its subcellular location is the cell membrane. It is found in the apical cell membrane. In Homo sapiens (Human), this protein is Cell adhesion molecule CEACAM7.